Consider the following 2407-residue polypeptide: Daf-12-interacting protein 1 (2407 aa).

A compositionally biased stretch (low complexity) spans 90–112; it reads QNSSMASMSSTPSSGQSSSPRNA. Residues 90–152 are disordered; that stretch reads QNSSMASMSS…PHLSVQSQQR (63 aa). In terms of domain architecture, RRM spans 277-335; that stretch reads CSVHVPHLDRHSPDHYRRRFESYGQVIDVDMVKSNDNKAFAVVQFTNIDDAQKALQDTN. Disordered stretches follow at residues 439–632, 737–767, 785–849, 874–896, 921–986, 993–1012, 1025–1844, 1858–1918, 1932–1976, 2077–2103, and 2172–2200; these read EVAA…LELD, ATDS…TNRL, LCIG…GRPA, PTHD…ETMV, LIAA…PSNA, RSQS…TPVV, SNQP…EDSE, IAQE…VNNH, LQPA…QQSD, EENE…LAAA, and SIQR…VNQN. A compositionally biased stretch (polar residues) spans 443-456; that stretch reads RSSSPTSKSENDQG. Residues 512 to 529 show a composition bias toward acidic residues; it reads EDSDEQNDVDEEDDEDVV. 3 stretches are compositionally biased toward basic and acidic residues: residues 530-541, 548-564, and 573-586; these read SEEKRHEPEEGK, GHRD…DSSE, and SHHE…KDSE. Residues 587–603 are compositionally biased toward polar residues; sequence AYQSRSFSPLNYQSQSP. Over residues 618–627 the composition is skewed to low complexity; the sequence is SPTTSSASSS. Polar residues-rich tracts occupy residues 791 to 826 and 837 to 849; these read TPST…TPRS and SRHN…GRPA. Over residues 924-946 the composition is skewed to polar residues; it reads ATSTGTHSVSSSAHSTPRHSISG. Residues 966–978 are compositionally biased toward basic and acidic residues; that stretch reads SRPEKVQIRHDTI. Polar residues predominate over residues 1043–1052; the sequence is SALQNIQNHQ. Residues 1053–1070 are compositionally biased toward low complexity; it reads PPHSNANSTPSTPSTSTH. Residues 1086–1153 show a composition bias toward basic and acidic residues; sequence KEKEEREREA…KVRKKAEKEK (68 aa). A compositionally biased stretch (acidic residues) spans 1165-1177; sequence SDESDSDSNDELD. 6 stretches are compositionally biased toward basic and acidic residues: residues 1178 to 1195, 1218 to 1227, 1279 to 1293, 1304 to 1320, 1335 to 1355, and 1376 to 1398; these read LDVR…KDHQ, RAHDSFEKMQ, ADQR…EKGE, NDAG…DREN, QGER…DAAA, and RRSS…PHED. 2 stretches are compositionally biased toward low complexity: residues 1456–1471 and 1488–1498; these read PKHL…TKRS and TTSSTSTATTS. The span at 1534–1547 shows a compositional bias: polar residues; the sequence is SMNSAADSPMSTTG. Over residues 1570 to 1595 the composition is skewed to low complexity; that stretch reads SSSGQHDSSSGSSSDSSSSDGSTSSD. 2 stretches are compositionally biased toward basic and acidic residues: residues 1679-1691 and 1703-1726; these read SEEH…HGDS and EHQE…HEEQ. Residues 1749-1770 show a composition bias toward polar residues; that stretch reads TQAQEKSAHTLISDQETDQAVQ. A compositionally biased stretch (basic and acidic residues) spans 1792-1805; sequence NEKEVSGKDPHNIK. Over residues 1809-1826 the composition is skewed to polar residues; sequence PLNNGHTDLLFSPSSSAH. Composition is skewed to basic and acidic residues over residues 1827-1836 and 1873-1892; these read ASEKQSTKSE and EEVK…KMEE. Composition is skewed to polar residues over residues 1895–1911 and 1932–1942; these read EQTP…SQDT and LQPASQHQVAQ. Positions 1962–1975 are enriched in low complexity; sequence SQQSQPSPMSSQQS. Positions 2049–2110 form a coiled coil; it reads NQMMQAKMKQ…AAATAAATMA (62 aa). The span at 2077-2099 shows a compositional bias: basic and acidic residues; the sequence is EENERKVEEDRREKQRKEEERQR. Low complexity predominate over residues 2176 to 2186; sequence PSSTASTSSNP. An SPOC domain is found at 2213-2383; that stretch reads QRWFYKHFPM…TRYLLIVFTN (171 aa).

As to quaternary structure, isoform d interacts with daf-12. Isoform d is widely expressed: detected in the hypodermis, seam cells, intestine, somatic gonad, neurons, vulval precursors, body wall muscle and pharynx.

It is found in the nucleus. Functionally, probable transcriptional corepressor which modulates activity of the nuclear hormone receptor daf-12 to regulate the dauer diapause. This is Daf-12-interacting protein 1 from Caenorhabditis elegans.